The primary structure comprises 257 residues: Imidazole glycerol phosphate synthase subunit HisF (257 aa).

Active-site residues include Asp-12 and Asp-131.

It belongs to the HisA/HisF family. Heterodimer of HisH and HisF.

It is found in the cytoplasm. It catalyses the reaction 5-[(5-phospho-1-deoxy-D-ribulos-1-ylimino)methylamino]-1-(5-phospho-beta-D-ribosyl)imidazole-4-carboxamide + L-glutamine = D-erythro-1-(imidazol-4-yl)glycerol 3-phosphate + 5-amino-1-(5-phospho-beta-D-ribosyl)imidazole-4-carboxamide + L-glutamate + H(+). Its pathway is amino-acid biosynthesis; L-histidine biosynthesis; L-histidine from 5-phospho-alpha-D-ribose 1-diphosphate: step 5/9. Functionally, IGPS catalyzes the conversion of PRFAR and glutamine to IGP, AICAR and glutamate. The HisF subunit catalyzes the cyclization activity that produces IGP and AICAR from PRFAR using the ammonia provided by the HisH subunit. In Burkholderia ambifaria (strain MC40-6), this protein is Imidazole glycerol phosphate synthase subunit HisF.